The chain runs to 390 residues: GDSL esterase/lipase At1g28580 (390 aa).

The signal sequence occupies residues 1–28 (MAYPGSPILMKLLVFIFLSTFVVTNVSS). Ser-44 serves as the catalytic Nucleophile. 2 N-linked (GlcNAc...) asparagine glycosylation sites follow: Asn-140 and Asn-322. Residues Asp-347 and His-350 contribute to the active site.

It belongs to the 'GDSL' lipolytic enzyme family.

It is found in the secreted. The polypeptide is GDSL esterase/lipase At1g28580 (Arabidopsis thaliana (Mouse-ear cress)).